The following is a 129-amino-acid chain: Fluoride-specific ion channel FluC 2 (129 aa).

The chain crosses the membrane as a helical span at residues 19–39 (GLGLVVPAAAVGGFPLGTLFI). The Na(+) site is built by Gly-74 and Thr-77. A helical transmembrane segment spans residues 95 to 115 (FGMAAVYIAASLFGGLLASWA).

Belongs to the fluoride channel Fluc/FEX (TC 1.A.43) family.

It is found in the cell membrane. The enzyme catalyses fluoride(in) = fluoride(out). Na(+) is not transported, but it plays an essential structural role and its presence is essential for fluoride channel function. Its function is as follows. Fluoride-specific ion channel. Important for reducing fluoride concentration in the cell, thus reducing its toxicity. This is Fluoride-specific ion channel FluC 2 from Geobacillus kaustophilus (strain HTA426).